The sequence spans 585 residues: Amyloid protein-binding protein 2 (585 aa).

8 TPR repeats span residues 50–83 (QGRL…HHCF), 120–153 (IQVG…CTLH), 206–239 (AALY…ITAG), 288–321 (SDTL…RQSV), 333–367 (HEDL…ITHI), 429–462 (AKHY…KEQL), 471–505 (ALSV…GKKL), and 514–547 (EYDY…NRLR).

As to quaternary structure, component of a CRL2 E3 ubiquitin-protein ligase complex, also named ECS (Elongin BC-CUL2/5-SOCS-box protein) complex, composed of CUL2, Elongin BC (ELOB and ELOC), RBX1 and substrate-specific adapter APPBP2. Interacts with APP; APP interaction inhibits the E3 ubiquitin-protein ligase activity of the CRL2(APPBP2) complex. Post-translationally, rapidly degraded by the proteasome upon overexpression of a C-terminal fragment of APP.

The protein resides in the nucleus. It localises to the cytoplasm. Its subcellular location is the cytoskeleton. The protein localises to the membrane. Its pathway is protein modification; protein ubiquitination. Its activity is regulated as follows. E3 ubiquitin-protein ligase activity of the CRL2(APPBP2) complex is inhibited by APP. Substrate-recognition component of a Cul2-RING (CRL2) E3 ubiquitin-protein ligase complex of the DesCEND (destruction via C-end degrons) pathway, which recognizes a C-degron located at the extreme C terminus of target proteins, leading to their ubiquitination and degradation. The C-degron recognized by the DesCEND pathway is usually a motif of less than ten residues and can be present in full-length proteins, truncated proteins or proteolytically cleaved forms. The CRL2(APPBP2) complex specifically recognizes proteins with a -Arg-Xaa-Xaa-Gly degron at the C-terminus, leading to their ubiquitination and degradation. The CRL2(APPBP2) complex mediates ubiquitination and degradation of truncated SELENOV selenoproteins produced by failed UGA/Sec decoding, which end with a -Arg-Xaa-Xaa-Gly degron. May play a role in intracellular protein transport: may be involved in the translocation of APP along microtubules toward the cell surface. This is Amyloid protein-binding protein 2 from Homo sapiens (Human).